The sequence spans 332 residues: Peroxidase C1C (332 aa).

An N-terminal signal peptide occupies residues 1–9 (MLHASFSNA). Q10 carries the post-translational modification Pyrrolidone carboxylic acid. Disulfide bonds link C20-C100, C53-C58, C106-C310, and C186-C218. N-linked (GlcNAc...) asparagine glycosylation occurs at N22. The active-site Proton acceptor is the H51. Ca(2+) contacts are provided by D52, V55, G57, D59, and S61. N66 is a glycosylation site (N-linked (GlcNAc...) asparagine). Substrate is bound at residue P148. H179 serves as a coordination point for heme b. Residue T180 participates in Ca(2+) binding. Residues N195, N207, and N223 are each glycosylated (N-linked (GlcNAc...) asparagine). The Ca(2+) site is built by D231, T234, and D239. N-linked (GlcNAc...) asparagine glycosylation is present at N264.

It belongs to the peroxidase family. Classical plant (class III) peroxidase subfamily. The cofactor is Ca(2+). It depends on heme b as a cofactor.

It is found in the secreted. The protein localises to the vacuole. It catalyses the reaction 2 a phenolic donor + H2O2 = 2 a phenolic radical donor + 2 H2O. Removal of H(2)O(2), oxidation of toxic reductants, biosynthesis and degradation of lignin, suberization, auxin catabolism, response to environmental stresses such as wounding, pathogen attack and oxidative stress. These functions might be dependent on each isozyme/isoform in each plant tissue. The protein is Peroxidase C1C (PRXC1C) of Armoracia rusticana (Horseradish).